We begin with the raw amino-acid sequence, 200 residues long: Ribonuclease HII (200 aa).

The RNase H type-2 domain occupies 9-198; the sequence is ALIAGVDEVG…VQRVLAQAKG (190 aa). D15, E16, and D107 together coordinate a divalent metal cation.

The protein belongs to the RNase HII family. It depends on Mn(2+) as a cofactor. Mg(2+) serves as cofactor.

It is found in the cytoplasm. It carries out the reaction Endonucleolytic cleavage to 5'-phosphomonoester.. Endonuclease that specifically degrades the RNA of RNA-DNA hybrids. This chain is Ribonuclease HII, found in Pseudoalteromonas translucida (strain TAC 125).